A 956-amino-acid chain; its full sequence is Calsyntenin-3 (956 aa).

The signal sequence occupies residues 1–19 (MTLLLVSLLLASLLQISSG). Residues 1–21 (MTLLLVSLLLASLLQISSGNK) are Cytoplasmic-facing. At 20-847 (NKANKHKPWI…SHRNSMVPSA (828 aa)) the chain is on the extracellular side. Positions 22-42 (ANKHKPWIEAEYQGIVMENDN) form an intramembrane region, helical. 2 Cadherin domains span residues 29-145 (IEAE…APVF) and 146-246 (VERL…KPSW). The Cytoplasmic segment spans residues 43 to 73 (TVLLNPPLFALDKDAPLRYAGEICGFRLHGS). Residues 74–94 (GVPFEAVILDKATGEGLIRAK) constitute an intramembrane region (helical). Residues 95 to 139 (EPVDCEAQKEHTFTIQAYDCGEGPDGTNTKKSHKATVHVRVNDVN) are Cytoplasmic-facing. Positions 140-160 (EFAPVFVERLYRAAVTEGKLY) form an intramembrane region, helical. Residues 161–248 (DRILRVEAID…KPTCKPSWQG (88 aa)) lie on the Cytoplasmic side of the membrane. Residues 249–269 (WNKRIEYAPGAGSLALFPGIR) form a helical membrane-spanning segment. Residues 270–357 (LETCDEPLWN…GTQAVQVPLG (88 aa)) are Lumenal-facing. N299, N327, N347, N507, and N740 each carry an N-linked (GlcNAc...) asparagine glycan. The chain crosses the membrane as a helical span at residues 848–868 (ATLIIVVCVGFLVLMVILGLV). The Cytoplasmic portion of the chain corresponds to 869–956 (RIHSLHRRVS…RIIESPPHRY (88 aa)). The tract at residues 916–956 (QTCVAGVAGGQQEEEDSSDSEAADSPSSDERRIIESPPHRY) is disordered. Acidic residues predominate over residues 927-937 (QEEEDSSDSEA). Over residues 943 to 956 (SDERRIIESPPHRY) the composition is skewed to basic and acidic residues.

It belongs to the calsyntenin family. As to quaternary structure, interacts (via cadherin domains) with both alpha and beta isoforms of neurexins (NRXN1, NRXN2 and NRXN3). Directly interacts with APBA2. Forms a tripartite complex with APBA2 and APP. Interacts with low affinity with KLC1. Interacts with SLC23A2/SVCT2. In terms of assembly, interacts with CIDEA; inhibiting the lipid transferase activity of CIDEA. Interacts with CIDEC; inhibiting the lipid transferase activity of CIDEC. Post-translationally, proteolytically processed under normal cellular conditions. A primary zeta-cleavage generates a large extracellular (soluble) N-terminal domain (sAlc) and a short C-terminal transmembrane fragment (CTF1). A secondary cleavage catalyzed by gamma-secretase within the transmembrane domain releases the beta-Alc-beta chain in the extracellular milieu and produces an intracellular fragment (AlcICD). This processing is strongly suppressed in the tripartite complex formed with APBA2 and APP, which seems to prevent the association with gamma-secretase. In terms of processing, ubiquitinated: endoplasmic reticulum-localized protein is ubiquitinated and degraded by the endoplasmic reticulum-associated degradation (ERAD) pathway. In terms of tissue distribution, restricted to the brain (at protein level). In the cerebral cortex, found in the somas and neuropil of all layers. Expressed at highest levels in neurons of cortical layer 5 and, at lower levels, in neurons of the upper layers. Highly expressed in Purkinje cells. Also found in a few scattered interneurons throughout the granule cell layer and occasionally in neurons in the molecular layer (at protein level). In all layers, high levels in a subpopulation of presumptive GABAergic neurons (based on morphology). Expression is restricted to adipose tissue, with high expression in thermogenic adipocytes (brown adipose tissue).

It is found in the postsynaptic cell membrane. It localises to the endoplasmic reticulum membrane. The protein localises to the golgi apparatus membrane. The protein resides in the cell projection. Its subcellular location is the dendrite. It is found in the lipid droplet. Its function is as follows. Postsynaptic adhesion molecule that binds to presynaptic neurexins to mediate both excitatory and inhibitory synapse formation. Promotes synapse development by acting as a cell adhesion molecule at the postsynaptic membrane, which associates with both neurexin-alpha and neurexin-beta proteins at the presynaptic membrane. Regulates the balance between excitatory and inhibitory synapses by inhibiting formation of excitatory parallel-fiber synapses and promoting formation of inhibitory synapses in the same neuron. May also be involved in ascorbate (vitamin C) uptake via its interaction with SLC23A2/SVCT2. Complex formation with APBA2 and APP, stabilizes APP metabolism and enhances APBA2-mediated suppression of beta-APP40 secretion, due to the retardation of intracellular APP maturation. Functionally, adipose-specific isoform that plays a key role in adaptive thermogenesis. Facilitates the efficient use of stored triglyceride by promoting multilocular morphology of thermogenic adipocytes: acts by inhibiting the activity of CIDEA and CIDEC on lipid droplets, thereby preventing lipid droplet fusion and facilitating lipid utilization. May also participate in adaptive thermogenesis by promoting sympathetic innervation of thermogenic adipose tissue: acts by driving secretion of neurotrophic factor S100B from brown adipocytes, stimulating neurite outgrowth from sympathetic neurons. The polypeptide is Calsyntenin-3 (Mus musculus (Mouse)).